We begin with the raw amino-acid sequence, 469 residues long: DNA (cytosine-5-)-methyltransferase M.ApeKI (469 aa).

The SAM-dependent MTase C5-type domain maps to 4–469 (YSTISLFSGA…EALAEVLDAV (466 aa)). Cysteine 93 is an active-site residue.

It belongs to the class I-like SAM-binding methyltransferase superfamily. C5-methyltransferase family.

It catalyses the reaction a 2'-deoxycytidine in DNA + S-adenosyl-L-methionine = a 5-methyl-2'-deoxycytidine in DNA + S-adenosyl-L-homocysteine + H(+). Cytosine methylase that recognizes the double-stranded sequence 5'-GC(A/T)GC-3', methylates C-5 position of the second cytosine on both strands, and protects the DNA from cleavage by the ApeKI endonuclease. This chain is DNA (cytosine-5-)-methyltransferase M.ApeKI, found in Aeropyrum pernix (strain ATCC 700893 / DSM 11879 / JCM 9820 / NBRC 100138 / K1).